Consider the following 86-residue polypeptide: Anti-adapter protein IraP (86 aa).

The stretch at 1–42 (MKNLIAELLVKLAQKEEESKELVAQVEALEIVVTALLRQMAQ) forms a coiled coil.

The protein belongs to the IraP family. In terms of assembly, interacts with RssB.

It localises to the cytoplasm. Its function is as follows. Inhibits RpoS proteolysis by regulating RssB activity, thereby increasing the stability of the sigma stress factor RpoS especially during phosphate starvation, but also in stationary phase and during nitrogen starvation. Its effect on RpoS stability is due to its interaction with RssB, which probably blocks the interaction of RssB with RpoS, and the consequent delivery of the RssB-RpoS complex to the ClpXP protein degradation pathway. The polypeptide is Anti-adapter protein IraP (Enterobacter sp. (strain 638)).